Reading from the N-terminus, the 585-residue chain is A-type ATP synthase subunit A (585 aa).

Residues 192–211 (MRQEWPVREPRPTVEKKTPR) are disordered. Positions 196–211 (WPVREPRPTVEKKTPR) are enriched in basic and acidic residues. 237–244 (GPFGSGKT) contacts ATP.

Belongs to the ATPase alpha/beta chains family. As to quaternary structure, has multiple subunits with at least A(3), B(3), C, D, E, F, H, I and proteolipid K(x).

It localises to the cell membrane. It carries out the reaction ATP + H2O + 4 H(+)(in) = ADP + phosphate + 5 H(+)(out). Its function is as follows. Component of the A-type ATP synthase that produces ATP from ADP in the presence of a proton gradient across the membrane. The A chain is the catalytic subunit. This chain is A-type ATP synthase subunit A, found in Haloquadratum walsbyi (strain DSM 16790 / HBSQ001).